Here is a 70-residue protein sequence, read N- to C-terminus: Plasticin-S1 (70 aa).

The N-terminal stretch at 1–22 is a signal peptide; sequence MAFLKKSLFLVLFLALVPLSIC. Residues 23-45 constitute a propeptide that is removed on maturation; sequence EEEKREGENEKEQEDDNQSEEKR. A disordered region spans residues 25 to 45; sequence EKREGENEKEQEDDNQSEEKR.

It belongs to the frog skin active peptide (FSAP) family. Plasticin subfamily. Expressed by the skin glands.

The protein localises to the secreted. Functionally, the native peptide is a cationic amphipathic alpha-helical antimicrobial peptide with potent activity against both Gram-positive and Gram-negative bacteria. It has weak activity against fungi and shows low hemolytic activity. This is Plasticin-S1 from Phyllomedusa sauvagei (Sauvage's leaf frog).